The chain runs to 156 residues: tRNA-specific adenosine deaminase (156 aa).

In terms of domain architecture, CMP/dCMP-type deaminase spans 2–120 (TNDIYFMTLA…GSLMNLLQQS (119 aa)). His-53 is a binding site for Zn(2+). Catalysis depends on Glu-55, which acts as the Proton donor. Positions 83 and 86 each coordinate Zn(2+).

It belongs to the cytidine and deoxycytidylate deaminase family. Homodimer. Zn(2+) is required as a cofactor.

It catalyses the reaction adenosine(34) in tRNA + H2O + H(+) = inosine(34) in tRNA + NH4(+). In terms of biological role, catalyzes the deamination of adenosine to inosine at the wobble position 34 of tRNA(Arg2). The polypeptide is tRNA-specific adenosine deaminase (Staphylococcus aureus (strain Mu50 / ATCC 700699)).